The following is a 393-amino-acid chain: 1-deoxy-D-xylulose 5-phosphate reductoisomerase (393 aa).

NADPH is bound by residues Thr16, Gly17, Ser18, Ile19, Ala42, Arg43, Asn44, and Asn127. Position 128 (Lys128) interacts with 1-deoxy-D-xylulose 5-phosphate. NADPH is bound at residue Glu129. Asp153 contacts Mn(2+). Residues Ser154, Glu155, Ser179, and His202 each coordinate 1-deoxy-D-xylulose 5-phosphate. Glu155 is a Mn(2+) binding site. NADPH is bound at residue Gly208. Ser215, Asn220, Lys221, and Glu224 together coordinate 1-deoxy-D-xylulose 5-phosphate. Glu224 contributes to the Mn(2+) binding site.

Belongs to the DXR family. Mg(2+) serves as cofactor. It depends on Mn(2+) as a cofactor.

The enzyme catalyses 2-C-methyl-D-erythritol 4-phosphate + NADP(+) = 1-deoxy-D-xylulose 5-phosphate + NADPH + H(+). It participates in isoprenoid biosynthesis; isopentenyl diphosphate biosynthesis via DXP pathway; isopentenyl diphosphate from 1-deoxy-D-xylulose 5-phosphate: step 1/6. In terms of biological role, catalyzes the NADPH-dependent rearrangement and reduction of 1-deoxy-D-xylulose-5-phosphate (DXP) to 2-C-methyl-D-erythritol 4-phosphate (MEP). The chain is 1-deoxy-D-xylulose 5-phosphate reductoisomerase from Jannaschia sp. (strain CCS1).